We begin with the raw amino-acid sequence, 436 residues long: GTPase Der (436 aa).

2 consecutive EngA-type G domains span residues 4 to 167 (PIVA…GEEE) and 176 to 351 (IRLS…ENHK). Residues 10–17 (GRPNVGKS), 57–61 (DTGGI), 119–122 (NKVD), 182–189 (GRPNVGKS), 229–233 (DTAGM), and 294–297 (NKWD) each bind GTP. The region spanning 352 to 436 (KRVQSSTLNE…PIHIIARKRN (85 aa)) is the KH-like domain.

This sequence belongs to the TRAFAC class TrmE-Era-EngA-EngB-Septin-like GTPase superfamily. EngA (Der) GTPase family. In terms of assembly, associates with the 50S ribosomal subunit.

GTPase that plays an essential role in the late steps of ribosome biogenesis. This is GTPase Der from Staphylococcus aureus (strain USA300).